The primary structure comprises 369 residues: Iron-sulfur cluster carrier protein (369 aa).

115–122 (GKGGVGKS) provides a ligand contact to ATP.

It belongs to the Mrp/NBP35 ATP-binding proteins family. Homodimer. Holo-ApbC forms a mixture of homodimers and homotetramers.

Its function is as follows. Binds and transfers iron-sulfur (Fe-S) clusters to target apoproteins. Can hydrolyze ATP. Both activities are required for function in vivo, but the ability to hydrolyze ATP is not necessary for Fe-S cluster transfer. The chain is Iron-sulfur cluster carrier protein from Salmonella typhimurium (strain LT2 / SGSC1412 / ATCC 700720).